The sequence spans 364 residues: Chaperone protein DnaJ (364 aa).

A J domain is found at Asp4–Gly69. A CR-type zinc finger spans residues Gly135 to Gln213. Residues Cys148, Cys151, Cys165, Cys168, Cys187, Cys190, Cys201, and Cys204 each coordinate Zn(2+). CXXCXGXG motif repeat units lie at residues Cys148 to Lys155, Cys165 to Gly172, Cys187 to Gly194, and Cys201 to Gly208.

This sequence belongs to the DnaJ family. In terms of assembly, homodimer. Zn(2+) serves as cofactor.

It localises to the cytoplasm. Functionally, participates actively in the response to hyperosmotic and heat shock by preventing the aggregation of stress-denatured proteins and by disaggregating proteins, also in an autonomous, DnaK-independent fashion. Unfolded proteins bind initially to DnaJ; upon interaction with the DnaJ-bound protein, DnaK hydrolyzes its bound ATP, resulting in the formation of a stable complex. GrpE releases ADP from DnaK; ATP binding to DnaK triggers the release of the substrate protein, thus completing the reaction cycle. Several rounds of ATP-dependent interactions between DnaJ, DnaK and GrpE are required for fully efficient folding. Also involved, together with DnaK and GrpE, in the DNA replication of plasmids through activation of initiation proteins. This is Chaperone protein DnaJ from Borreliella burgdorferi (strain ATCC 35210 / DSM 4680 / CIP 102532 / B31) (Borrelia burgdorferi).